Reading from the N-terminus, the 274-residue chain is RNA polymerase sigma factor SigI4 (274 aa).

Residues 87–100 carry the Polymerase core binding motif; it reads EEYSVGLMAFNEAI. Residues 226 to 245 constitute a DNA-binding region (H-T-H motif); that stretch reads LSELMGLVNVHRKTVERNRK.

It belongs to the sigma-70 factor family. SigI subfamily. As to quaternary structure, interacts with RsgI4.

Its subcellular location is the cytoplasm. Negatively regulated by the anti-sigma-I factor RsgI4. Binding of the polysaccharide substrate to RsgI4 may lead to the release and activation of SigI4. Functionally, sigma factors are initiation factors that promote the attachment of RNA polymerase to specific initiation sites and are then released. This sigma factor is involved in regulation of cellulosomal genes via an external polysaccharide-sensing mechanism. This is RNA polymerase sigma factor SigI4 from Acetivibrio thermocellus (strain ATCC 27405 / DSM 1237 / JCM 9322 / NBRC 103400 / NCIMB 10682 / NRRL B-4536 / VPI 7372) (Clostridium thermocellum).